Here is a 98-residue protein sequence, read N- to C-terminus: NADH-ubiquinone oxidoreductase chain 4L (98 aa).

Helical transmembrane passes span 1-21 (MPFI…GLLI), 29-49 (SLLC…TMTL), and 61-81 (IILL…LILI).

Belongs to the complex I subunit 4L family. As to quaternary structure, core subunit of respiratory chain NADH dehydrogenase (Complex I) which is composed of 45 different subunits.

It localises to the mitochondrion inner membrane. It catalyses the reaction a ubiquinone + NADH + 5 H(+)(in) = a ubiquinol + NAD(+) + 4 H(+)(out). Its function is as follows. Core subunit of the mitochondrial membrane respiratory chain NADH dehydrogenase (Complex I) which catalyzes electron transfer from NADH through the respiratory chain, using ubiquinone as an electron acceptor. Part of the enzyme membrane arm which is embedded in the lipid bilayer and involved in proton translocation. In Cebus albifrons (White-fronted capuchin), this protein is NADH-ubiquinone oxidoreductase chain 4L (MT-ND4L).